Consider the following 130-residue polypeptide: Small ribosomal subunit protein uS9 (130 aa).

The protein belongs to the universal ribosomal protein uS9 family.

The polypeptide is Small ribosomal subunit protein uS9 (Buchnera aphidicola subsp. Acyrthosiphon pisum (strain Tuc7)).